Reading from the N-terminus, the 320-residue chain is Malate dehydrogenase (320 aa).

NAD(+) contacts are provided by residues 10–15 (GSGMIG) and Asp-34. Arg-83 and Arg-89 together coordinate substrate. NAD(+)-binding positions include Asn-96 and 119 to 121 (ITN). The substrate site is built by Asn-121 and Arg-152. The active-site Proton acceptor is the His-176.

This sequence belongs to the LDH/MDH superfamily. MDH type 3 family.

The enzyme catalyses (S)-malate + NAD(+) = oxaloacetate + NADH + H(+). Its function is as follows. Catalyzes the reversible oxidation of malate to oxaloacetate. The sequence is that of Malate dehydrogenase from Rhizobium meliloti (strain 1021) (Ensifer meliloti).